The following is a 473-amino-acid chain: Aspartyl/glutamyl-tRNA(Asn/Gln) amidotransferase subunit B (473 aa).

The protein belongs to the GatB/GatE family. GatB subfamily. In terms of assembly, heterotrimer of A, B and C subunits.

The enzyme catalyses L-glutamyl-tRNA(Gln) + L-glutamine + ATP + H2O = L-glutaminyl-tRNA(Gln) + L-glutamate + ADP + phosphate + H(+). It carries out the reaction L-aspartyl-tRNA(Asn) + L-glutamine + ATP + H2O = L-asparaginyl-tRNA(Asn) + L-glutamate + ADP + phosphate + 2 H(+). Functionally, allows the formation of correctly charged Asn-tRNA(Asn) or Gln-tRNA(Gln) through the transamidation of misacylated Asp-tRNA(Asn) or Glu-tRNA(Gln) in organisms which lack either or both of asparaginyl-tRNA or glutaminyl-tRNA synthetases. The reaction takes place in the presence of glutamine and ATP through an activated phospho-Asp-tRNA(Asn) or phospho-Glu-tRNA(Gln). The chain is Aspartyl/glutamyl-tRNA(Asn/Gln) amidotransferase subunit B from Francisella tularensis subsp. novicida (strain U112).